Consider the following 244-residue polypeptide: Mitochondrial import inner membrane translocase subunit Tim21 (244 aa).

A mitochondrion-targeting transit peptide spans 1 to 18 (MICTLLRAVRCTERLHGC). Positions 69–89 (VRSPQSAKEDGSKQVSVHRSQ) are disordered. Residues 108 to 128 (FTYLIVVLIGISITGGLFYTI) form a helical membrane-spanning segment.

It belongs to the TIM21 family. As to quaternary structure, component of the TIM23 complex. Component of the MITRAC (mitochondrial translation regulation assembly intermediate of cytochrome c oxidase complex) complex, the core components of this complex being COA3/MITRAC12 and COX14. Interacts with COA3 and MT-CO1/COX1.

It localises to the mitochondrion membrane. Participates in the translocation of transit peptide-containing proteins across the mitochondrial inner membrane. Also required for assembly of mitochondrial respiratory chain complex I and complex IV as component of the MITRAC (mitochondrial translation regulation assembly intermediate of cytochrome c oxidase complex) complex. Probably shuttles between the presequence translocase and respiratory-chain assembly intermediates in a process that promotes incorporation of early nuclear-encoded subunits into these complexes. The protein is Mitochondrial import inner membrane translocase subunit Tim21 (TIMM21) of Bos taurus (Bovine).